The sequence spans 232 residues: 7-cyano-7-deazaguanine synthase 1 (232 aa).

Position 7-17 (7-17 (CSGGLDSVSLA)) interacts with ATP. Cys-185, Cys-193, Cys-196, and Cys-199 together coordinate Zn(2+).

This sequence belongs to the QueC family. Zn(2+) serves as cofactor.

It catalyses the reaction 7-carboxy-7-deazaguanine + NH4(+) + ATP = 7-cyano-7-deazaguanine + ADP + phosphate + H2O + H(+). Its pathway is purine metabolism; 7-cyano-7-deazaguanine biosynthesis. Functionally, catalyzes the ATP-dependent conversion of 7-carboxy-7-deazaguanine (CDG) to 7-cyano-7-deazaguanine (preQ(0)). The chain is 7-cyano-7-deazaguanine synthase 1 from Mesorhizobium japonicum (strain LMG 29417 / CECT 9101 / MAFF 303099) (Mesorhizobium loti (strain MAFF 303099)).